The chain runs to 2169 residues: Protein sidekick-1 (2169 aa).

The N-terminal stretch at 1–50 is a signal peptide; sequence MVGRKVDREIIARRNSRRDGMMMKLNFCFFFCRRWWAFLLLQLHMLQALA. Over 51–1961 the chain is Extracellular; it reads QDDVAPYFKT…TEAPFYEEWW (1911 aa). Ig-like C2-type domains are found at residues 56–138, 143–229, 245–333, 338–428, and 432–521; these read PYFK…SEVQ, GNFM…SPLI, PIIV…AFIS, PYFT…LDVT, and PAFI…VMLT. Residues Cys78 and Cys121 are joined by a disulfide bond. 3 N-linked (GlcNAc...) asparagine glycosylation sites follow: Asn93, Asn223, and Asn253. Cystine bridges form between Cys267/Cys314, Cys360/Cys410, and Cys453/Cys505. Residues Asn502, Asn524, and Asn534 are each glycosylated (N-linked (GlcNAc...) asparagine). Residues 525-615 enclose the Ig-like C2-type 6 domain; that stretch reads RTFIVHPPEN…GNDSRMARLE (91 aa). Cys547 and Cys599 form a disulfide bridge. N-linked (GlcNAc...) asparagine glycans are attached at residues Asn607, Asn631, Asn734, Asn773, Asn834, Asn967, and Asn977. Fibronectin type-III domains are found at residues 622–718, 723–819, 824–922, 926–1020, 1024–1123, 1128–1226, 1231–1328, 1332–1426, 1431–1528, 1533–1651, 1656–1752, 1756–1851, and 1854–1955; these read SPQN…LPEE, PPKN…TLQG, PPQN…TLED, AVGH…VPPE, APSN…TLQA, APGS…TRES, PPEN…TKDD, PPIR…TEKR, PPQQ…TLQD, PPSS…VGEA, APQN…THQA, APSF…AGPA, and SPGS…TEAP. N-linked (GlcNAc...) asparagine glycans are attached at residues Asn1234 and Asn1285. A disordered region spans residues 1423 to 1443; sequence TEKRERPAPPQQLTTPQSDVS. The segment covering 1433–1443 has biased composition (polar residues); it reads QQLTTPQSDVS. Asn1606, Asn1700, Asn1719, Asn1771, and Asn1845 each carry an N-linked (GlcNAc...) asparagine glycan. Residues 1962–1982 traverse the membrane as a helical segment; it reads FLLVMALSSLILILLVVFALV. The Cytoplasmic portion of the chain corresponds to 1983–2169; the sequence is LHGQSKKYKN…TPVTGFSSFV (187 aa). Disordered stretches follow at residues 2028 to 2050 and 2145 to 2169; these read TFSK…HYSD and GGVY…SSFV. Over residues 2160 to 2169 the composition is skewed to polar residues; sequence TPVTGFSSFV. The PDZ-binding motif lies at 2163–2169; it reads TGFSSFV.

The protein belongs to the sidekick family. In terms of assembly, homodimer; mediates homophilic interactions to promote cell adhesion. In terms of tissue distribution, expressed by non-overlapping subsets of retinal neurons. SDK1, SDK2, DSCAM and DSCAML1 are expressed in non-overlapping subsets of interneurons and retinal ganglion cells (RGCs) that form synapses in distinct inner plexiform layer (IPL) sublaminae.

The protein resides in the cell membrane. Its subcellular location is the synapse. In terms of biological role, adhesion molecule that promotes lamina-specific synaptic connections in the retina. Expressed in specific subsets of interneurons and retinal ganglion cells (RGCs) and promotes synaptic connectivity via homophilic interactions. In Gallus gallus (Chicken), this protein is Protein sidekick-1.